Here is a 105-residue protein sequence, read N- to C-terminus: Large ribosomal subunit protein eL36 (105 aa).

At Lys-62 the chain carries N6-acetyllysine.

This sequence belongs to the eukaryotic ribosomal protein eL36 family. Component of the large ribosomal subunit.

It is found in the cytoplasm. It localises to the cytosol. In terms of biological role, component of the large ribosomal subunit. The ribosome is a large ribonucleoprotein complex responsible for the synthesis of proteins in the cell. This Rattus norvegicus (Rat) protein is Large ribosomal subunit protein eL36 (Rpl36).